A 438-amino-acid polypeptide reads, in one-letter code: Ribosomal protein uS12 methylthiotransferase RimO (438 aa).

Positions 6–118 (KQLCLISLGC…IDILIAKKQN (113 aa)) constitute an MTTase N-terminal domain. 6 residues coordinate [4Fe-4S] cluster: cysteine 15, cysteine 49, cysteine 81, cysteine 150, cysteine 154, and cysteine 157. In terms of domain architecture, Radical SAM core spans 136–364 (TGSSVHAYVK…NKIALKHQHN (229 aa)).

It belongs to the methylthiotransferase family. RimO subfamily. It depends on [4Fe-4S] cluster as a cofactor.

The protein resides in the cytoplasm. The enzyme catalyses L-aspartate(89)-[ribosomal protein uS12]-hydrogen + (sulfur carrier)-SH + AH2 + 2 S-adenosyl-L-methionine = 3-methylsulfanyl-L-aspartate(89)-[ribosomal protein uS12]-hydrogen + (sulfur carrier)-H + 5'-deoxyadenosine + L-methionine + A + S-adenosyl-L-homocysteine + 2 H(+). Catalyzes the methylthiolation of an aspartic acid residue of ribosomal protein uS12. This is Ribosomal protein uS12 methylthiotransferase RimO from Helicobacter acinonychis (strain Sheeba).